The chain runs to 394 residues: Nicotinate phosphoribosyltransferase (394 aa).

Phosphohistidine; by autocatalysis is present on histidine 218.

Belongs to the NAPRTase family. Post-translationally, transiently phosphorylated on a His residue during the reaction cycle. Phosphorylation strongly increases the affinity for substrates and increases the rate of nicotinate D-ribonucleotide production. Dephosphorylation regenerates the low-affinity form of the enzyme, leading to product release.

The enzyme catalyses nicotinate + 5-phospho-alpha-D-ribose 1-diphosphate + ATP + H2O = nicotinate beta-D-ribonucleotide + ADP + phosphate + diphosphate. It functions in the pathway cofactor biosynthesis; NAD(+) biosynthesis; nicotinate D-ribonucleotide from nicotinate: step 1/1. Functionally, catalyzes the synthesis of beta-nicotinate D-ribonucleotide from nicotinate and 5-phospho-D-ribose 1-phosphate at the expense of ATP. This Xylella fastidiosa (strain Temecula1 / ATCC 700964) protein is Nicotinate phosphoribosyltransferase.